The following is a 187-amino-acid chain: UPF0301 protein lpl0620 (187 aa).

It belongs to the UPF0301 (AlgH) family.

The protein is UPF0301 protein lpl0620 of Legionella pneumophila (strain Lens).